Here is a 78-residue protein sequence, read N- to C-terminus: U-scoloptoxin(04)-Er1b (78 aa).

An N-terminal signal peptide occupies residues 1–24; the sequence is MTRHLIFAAVLLVCLFVCWNAVGA. Positions 25-28 are excised as a propeptide; it reads QDAR.

This sequence belongs to the scoloptoxin-04 family. Contains 2 disulfide bonds. Expressed by the venom gland.

The protein resides in the secreted. In Ethmostigmus rubripes (Giant centipede), this protein is U-scoloptoxin(04)-Er1b.